The primary structure comprises 434 residues: Septin-6 (434 aa).

A2 is subject to N-acetylalanine. S27 carries the phosphoserine modification. The Septin-type G domain maps to 39-305 (QGFCFNILCV…ELYRRCKLEE (267 aa)). A G1 motif region spans residues 49-56 (GETGLGKS). GTP is bound by residues 49–56 (GETGLGKS), G104, 185–193 (KADAISKSE), G239, and R254. The tract at residues 101–104 (STVG) is G3 motif. Positions 184–187 (AKAD) are G4 motif. Positions 321 to 409 (QETYEAKRNE…KTAAELLQSQ (89 aa)) form a coiled coil. K367 carries the post-translational modification N6-acetyllysine. The interval 405–434 (LLQSQGSQAGGSQTLKRDKEKKNNPWLCTE) is disordered. The span at 407 to 417 (QSQGSQAGGSQ) shows a compositional bias: low complexity. S416 is modified (phosphoserine). T418 bears the Phosphothreonine mark.

It belongs to the TRAFAC class TrmE-Era-EngA-EngB-Septin-like GTPase superfamily. Septin GTPase family. As to quaternary structure, septins polymerize into heterooligomeric protein complexes that form filaments, and associate with cellular membranes, actin filaments and microtubules. GTPase activity is required for filament formation. Filaments are assembled from asymmetrical heterotrimers, composed of SEPTIN2, SEPTIN6 and SEPTIN7 that associate head-to-head to form a hexameric unit. Within the trimer, directly interacts with SEPTIN2 and SEPTIN7. Also interacts with SEPTIN9 and SEPTIN12. Interaction with SEPTIN12 alters filament structure. Component of a septin core octameric complex consisting of SEPTIN12, SEPTIN7, SEPTIN6 and SEPTIN2 or SEPTIN4 in the order 12-7-6-2-2-6-7-12 or 12-7-6-4-4-6-7-12 and located in the sperm annulus. Interacts with SOCS7. Interacts with HNRNPA1. In terms of assembly, (Microbial infection) Interacts with HCV NS5B. In terms of tissue distribution, widely expressed.

The protein localises to the cytoplasm. It localises to the cytoskeleton. Its subcellular location is the spindle. It is found in the chromosome. The protein resides in the centromere. The protein localises to the kinetochore. It localises to the cleavage furrow. Its subcellular location is the midbody. It is found in the cell projection. The protein resides in the cilium. The protein localises to the flagellum. Functionally, filament-forming cytoskeletal GTPase. Required for normal organization of the actin cytoskeleton. Involved in cytokinesis. May play a role in HCV RNA replication. Forms a filamentous structure with SEPTIN12, SEPTIN6, SEPTIN2 and probably SEPTIN4 at the sperm annulus which is required for the structural integrity and motility of the sperm tail during postmeiotic differentiation. The polypeptide is Septin-6 (Homo sapiens (Human)).